The chain runs to 518 residues: Pre-glycoprotein polyprotein GP complex (518 aa).

A lipid anchor (N-myristoyl glycine; by host) is attached at Gly-2. Residues 2–17 (GQVIGFFQSLPNIINE) are Extracellular-facing. The chain crosses the membrane as a helical span at residues 18–33 (ALNIALICVALIAILK). Topologically, residues 34–58 (GIVNIWKSGLIQLFIFLILAGRSCS) are cytoplasmic. Zn(2+) is bound at residue Cys-57. Residues 59–456 (HTFQIGRNHE…QGSTPLSLVD (398 aa)) lie on the Extracellular side of the membrane. Cystine bridges form between Cys-87–Cys-258, Cys-303–Cys-316, Cys-325–Cys-334, and Cys-388–Cys-409. N-linked (GlcNAc...) asparagine; by host glycosylation is found at Asn-90, Asn-112, Asn-127, Asn-180, and Asn-251. Residues Asn-389, Asn-397, Asn-414, and Asn-419 are each glycosylated (N-linked (GlcNAc...) asparagine; by host). A helical membrane pass occupies residues 457 to 477 (LCFWSTLFYVTTLFAHLVGFP). Residues 478-518 (THRHILDGPCPKPHRLTKKGICSCGHFGIPGKPVRWVKRSR) lie on the Cytoplasmic side of the membrane. Positions 479, 481, 487, 491, 499, and 501 each coordinate Zn(2+).

The protein belongs to the arenaviridae GPC protein family. As to quaternary structure, interacts with glycoprotein G2. Part of the GP complex (GP-C) together with glycoprotein G1 and glycoprotein G2. The GP-complex interacts with protein Z, which interacts with ribonucleocapsid; these interactions may induce virion budding. Homotrimer; disulfide-linked. In pre-fusion state, G1 homotrimers bind G2 homotrimers via ionic interactions. Part of the GP complex (GP-C) together with glycoprotein G2 and the stable signal peptide. The GP-complex interacts with protein Z, which interacts with ribonucleocapsid; these interactions may induce virion budding. In terms of assembly, homotrimer. Interacts with the stable signal peptide. In pre-fusion state, G2 homotrimers bind G1 homotrimers via ionic interactions. Part of the GP complex (GP-C) together with glycoprotein G1 and the stable signal peptide. Acidification in the endosome triggers rearrangements, which ultimately leads to a 6 helix bundle formed by the two heptad repeat domains (HR1 and HR2) in post-fusion state. The GP-complex interacts with protein Z, which interacts with ribonucleocapsid; these interactions may induce virion budding. Post-translationally, specific enzymatic cleavages in vivo yield mature proteins. GP-C polyprotein is cleaved in the endoplasmic reticulum by the host protease MBTPS1. Only cleaved glycoprotein is incorporated into virions. The SSP remains stably associated with the GP complex following cleavage by signal peptidase and plays crucial roles in the trafficking of GP through the secretory pathway. In terms of processing, myristoylation is necessary for GP2-mediated fusion activity.

Its subcellular location is the virion membrane. The protein resides in the host endoplasmic reticulum membrane. It is found in the host Golgi apparatus membrane. The protein localises to the host cell membrane. Its function is as follows. Functions as a cleaved signal peptide that is retained as the third component of the GP complex (GP-C). Helps to stabilize the spike complex in its native conformation. The SSP is required for efficient glycoprotein expression, post-translational maturation cleavage of G1 and G2, glycoprotein transport to the cell surface plasma membrane, formation of infectious virus particles, and acid pH-dependent glycoprotein-mediated cell fusion. Functionally, forms the virion spikes together with glycoprotein G2. The glycoprotein spike trimers are connected to the underlying matrix. Mediates virus attachment to host receptor alpha-dystroglycan DAG1. This attachment induces virion internalization predominantly through clathrin- and caveolin-independent endocytosis. Forms the virion spikes together with glycoprotein G1. The glycoprotein spike trimers are connected to the underlying matrix. Class I viral fusion protein that directs fusion of viral and host endosomal membranes, leading to delivery of the nucleocapsid into the cytoplasm. Membrane fusion is mediated by irreversible conformational changes induced by acidification. The chain is Pre-glycoprotein polyprotein GP complex from Bolomys (OLVV).